The chain runs to 259 residues: UPF0014 membrane protein slr1647 (259 aa).

7 helical membrane passes run 4 to 24, 34 to 54, 55 to 75, 98 to 118, 128 to 148, 195 to 215, and 225 to 245; these read ALIE…GAAI, LTGQ…VVGY, FLAV…LAIM, LWLS…VVII, YLIP…SLAG, MMVV…LAGG, and ILIM…VTAT.

The protein belongs to the UPF0014 family.

Its subcellular location is the cell membrane. This is UPF0014 membrane protein slr1647 from Synechocystis sp. (strain ATCC 27184 / PCC 6803 / Kazusa).